Reading from the N-terminus, the 301-residue chain is Phosducin-like protein (301 aa).

Residue Thr2 is modified to N-acetylthreonine. Residues 15–53 (YYYSSSEEEDSDHEDKDRGRGALAGSSMPADADLAGEGI) form a disordered region. Ser20, Ser25, Ser226, Ser293, and Ser296 each carry phosphoserine. The region spanning 37-299 (LAGSSMPADA…TCHSEDSDLE (263 aa)) is the Phosducin domain. Positions 158–301 (FKQVFEIPSG…HSEDSDLEID (144 aa)) are thioredoxin fold.

It belongs to the phosducin family. In terms of assembly, forms a complex with the beta and gamma subunits of the GTP-binding protein, transducin. Interacts with the CCT chaperonin complex.

Its subcellular location is the cell projection. It localises to the cilium. Functions as a co-chaperone for CCT in the assembly of heterotrimeric G protein complexes, facilitates the assembly of both Gbeta-Ggamma and RGS-Gbeta5 heterodimers. Also acts as a positive regulator of hedgehog signaling and regulates ciliary function. The polypeptide is Phosducin-like protein (PDCL) (Bos taurus (Bovine)).